Here is a 379-residue protein sequence, read N- to C-terminus: Cytochrome b (379 aa).

Helical transmembrane passes span 33 to 53 (FGSLLGMCLMIQILTGLFLAM), 77 to 98 (WLIRYLHANGASMFFICLFIHV), 113 to 133 (WNIGIILFFTTMATAFVGYVL), and 178 to 198 (FFAFHFILPFIITAFVLVHLL). H83 and H97 together coordinate heme b. Heme b-binding residues include H182 and H196. H201 is a binding site for a ubiquinone. 4 helical membrane passes run 226 to 246 (IKDLLGILFLLMALMILALFF), 288 to 308 (LGGVLALLLSILILMAFPLLN), 320 to 340 (ITQIIYWILIANLLVLTWIGG), and 347 to 367 (FTMIGQIASITYFTIILILMP).

It belongs to the cytochrome b family. In terms of assembly, the cytochrome bc1 complex contains 11 subunits: 3 respiratory subunits (MT-CYB, CYC1 and UQCRFS1), 2 core proteins (UQCRC1 and UQCRC2) and 6 low-molecular weight proteins (UQCRH/QCR6, UQCRB/QCR7, UQCRQ/QCR8, UQCR10/QCR9, UQCR11/QCR10 and a cleavage product of UQCRFS1). This cytochrome bc1 complex then forms a dimer. Heme b is required as a cofactor.

Its subcellular location is the mitochondrion inner membrane. Component of the ubiquinol-cytochrome c reductase complex (complex III or cytochrome b-c1 complex) that is part of the mitochondrial respiratory chain. The b-c1 complex mediates electron transfer from ubiquinol to cytochrome c. Contributes to the generation of a proton gradient across the mitochondrial membrane that is then used for ATP synthesis. This chain is Cytochrome b (MT-CYB), found in Akodon dayi (Day's grass mouse).